The sequence spans 399 residues: Phosphoglycerate kinase (399 aa).

Residues 21 to 23, Arg-36, 59 to 62, Arg-120, and Arg-158 each bind substrate; these read DFN and HLGR. ATP is bound by residues Lys-209, Gly-297, Glu-328, and 355–358; that span reads GGDS.

This sequence belongs to the phosphoglycerate kinase family. Monomer.

Its subcellular location is the cytoplasm. It carries out the reaction (2R)-3-phosphoglycerate + ATP = (2R)-3-phospho-glyceroyl phosphate + ADP. It participates in carbohydrate degradation; glycolysis; pyruvate from D-glyceraldehyde 3-phosphate: step 2/5. This chain is Phosphoglycerate kinase, found in Streptococcus thermophilus (strain ATCC BAA-491 / LMD-9).